The chain runs to 228 residues: 5'-methylthioadenosine/S-adenosylhomocysteine nucleosidase (228 aa).

Glu11 (proton acceptor) is an active-site residue. Residues Gly77, Ile151, and 172–173 (ME) each bind substrate. Residue Asp196 is the Proton donor of the active site.

Belongs to the PNP/UDP phosphorylase family. MtnN subfamily.

The catalysed reaction is S-adenosyl-L-homocysteine + H2O = S-(5-deoxy-D-ribos-5-yl)-L-homocysteine + adenine. The enzyme catalyses S-methyl-5'-thioadenosine + H2O = 5-(methylsulfanyl)-D-ribose + adenine. It catalyses the reaction 5'-deoxyadenosine + H2O = 5-deoxy-D-ribose + adenine. It participates in amino-acid biosynthesis; L-methionine biosynthesis via salvage pathway; S-methyl-5-thio-alpha-D-ribose 1-phosphate from S-methyl-5'-thioadenosine (hydrolase route): step 1/2. Functionally, catalyzes the irreversible cleavage of the glycosidic bond in both 5'-methylthioadenosine (MTA) and S-adenosylhomocysteine (SAH/AdoHcy) to adenine and the corresponding thioribose, 5'-methylthioribose and S-ribosylhomocysteine, respectively. Also cleaves 5'-deoxyadenosine, a toxic by-product of radical S-adenosylmethionine (SAM) enzymes, into 5-deoxyribose and adenine. The polypeptide is 5'-methylthioadenosine/S-adenosylhomocysteine nucleosidase (Staphylococcus aureus (strain bovine RF122 / ET3-1)).